A 317-amino-acid polypeptide reads, in one-letter code: Low affinity immunoglobulin gamma Fc region receptor II-a (317 aa).

The signal sequence occupies residues 1–33 (MTMETQMSQNVCPRNLWLLQPLTVLLLLASADS). Residues 34–217 (QAAAPPKAVL…PSMGSSSPMG (184 aa)) are Extracellular-facing. Ig-like C2-type domains lie at 39–118 (PKAV…VHLT) and 122–204 (EWLV…VTIT). Intrachain disulfides connect cysteine 62–cysteine 104 and cysteine 143–cysteine 187. Residues asparagine 97 and asparagine 178 are each glycosylated (N-linked (GlcNAc...) asparagine). The helical transmembrane segment at 218–240 (IIVAVVIATAVAAIVAAVVALIY) threads the bilayer. Residues 241–317 (CRKKRISANS…PPNDHVNSNN (77 aa)) are Cytoplasmic-facing. 2 positions are modified to phosphotyrosine; by SRC-type Tyr-kinases: tyrosine 288 and tyrosine 304. Positions 292 to 317 (NPRAPTDDDKNIYLTLPPNDHVNSNN) are disordered.

In terms of assembly, interacts with IGHG1. Interacts with INPP5D/SHIP1 and INPPL1/SHIP2, regulating its function. Interacts with APCS and FGR. Interacts with HCK. In terms of processing, phosphorylated by SRC-type Tyr-kinases such as LYN, BLK, FYN, HCK and SYK. As to expression, found on monocytes, neutrophils and eosinophil platelets.

The protein resides in the cell membrane. Binds to the Fc region of immunoglobulins gamma. Low affinity receptor. By binding to IgG it initiates cellular responses against pathogens and soluble antigens. Promotes phagocytosis of opsonized antigens. In Homo sapiens (Human), this protein is Low affinity immunoglobulin gamma Fc region receptor II-a (FCGR2A).